The chain runs to 419 residues: Gamma-glutamyl phosphate reductase (419 aa).

This sequence belongs to the gamma-glutamyl phosphate reductase family.

It is found in the cytoplasm. It carries out the reaction L-glutamate 5-semialdehyde + phosphate + NADP(+) = L-glutamyl 5-phosphate + NADPH + H(+). Its pathway is amino-acid biosynthesis; L-proline biosynthesis; L-glutamate 5-semialdehyde from L-glutamate: step 2/2. Functionally, catalyzes the NADPH-dependent reduction of L-glutamate 5-phosphate into L-glutamate 5-semialdehyde and phosphate. The product spontaneously undergoes cyclization to form 1-pyrroline-5-carboxylate. This chain is Gamma-glutamyl phosphate reductase, found in Yersinia pestis.